A 285-amino-acid chain; its full sequence is Cytosolic Fe-S cluster assembly factor CFD1 (285 aa).

30–37 serves as a coordination point for ATP; that stretch reads GKGGVGKS. [4Fe-4S] cluster is bound by residues cysteine 206 and cysteine 209.

This sequence belongs to the Mrp/NBP35 ATP-binding proteins family. NUBP2/CFD1 subfamily. Heterotetramer of 2 NBP35 and 2 CFD1 chains. Requires [4Fe-4S] cluster as cofactor.

The protein localises to the cytoplasm. Component of the cytosolic iron-sulfur (Fe/S) protein assembly (CIA) machinery. Required for maturation of extramitochondrial Fe-S proteins. The NBP35-CFD1 heterotetramer forms a Fe-S scaffold complex, mediating the de novo assembly of an Fe-S cluster and its transfer to target apoproteins. Required for biogenesis and export of both ribosomal subunits, which may reflect a role in assembly of the Fe/S clusters in RLI1, a protein which performs rRNA processing and ribosome export. This is Cytosolic Fe-S cluster assembly factor CFD1 from Candida glabrata (strain ATCC 2001 / BCRC 20586 / JCM 3761 / NBRC 0622 / NRRL Y-65 / CBS 138) (Yeast).